The primary structure comprises 201 residues: Proteinase inhibitor type-2 CEVI57 (201 aa).

The N-terminal stretch at 1–23 is a signal peptide; that stretch reads MAVYKVSFLAHLLVLGMYLLVST. Repeat copies occupy residues 27–83, 84–143, and 144–199. 8 disulfide bridges follow: Cys-30–Cys-118, Cys-34–Cys-114, Cys-42–Cys-124, Cys-54–Cys-91, Cys-57–Cys-75, Cys-58–Cys-87, Cys-64–Cys-100, and Cys-117–Cys-135.

It belongs to the protease inhibitor I20 (potato type II proteinase inhibitor) family.

The protein is Proteinase inhibitor type-2 CEVI57 (CEVI57) of Solanum lycopersicum (Tomato).